A 185-amino-acid polypeptide reads, in one-letter code: Peptide deformylase (185 aa).

2 residues coordinate Fe cation: Cys-94 and His-136. Residue Glu-137 is part of the active site. Residue His-140 participates in Fe cation binding.

Belongs to the polypeptide deformylase family. It depends on Fe(2+) as a cofactor.

The enzyme catalyses N-terminal N-formyl-L-methionyl-[peptide] + H2O = N-terminal L-methionyl-[peptide] + formate. Functionally, removes the formyl group from the N-terminal Met of newly synthesized proteins. Requires at least a dipeptide for an efficient rate of reaction. N-terminal L-methionine is a prerequisite for activity but the enzyme has broad specificity at other positions. The protein is Peptide deformylase of Chlorobium limicola (strain DSM 245 / NBRC 103803 / 6330).